We begin with the raw amino-acid sequence, 526 residues long: Cytochrome P450 4e2 (526 aa).

Glu307 and Cys444 together coordinate heme.

Belongs to the cytochrome P450 family. The cofactor is heme.

It is found in the endoplasmic reticulum membrane. The protein localises to the microsome membrane. Functionally, may be involved in the metabolism of insect hormones and in the breakdown of synthetic insecticides. In Drosophila melanogaster (Fruit fly), this protein is Cytochrome P450 4e2 (Cyp4e2).